A 284-amino-acid polypeptide reads, in one-letter code: P2R1A-PPP2R2A-interacting phosphatase regulator 1 (284 aa).

Disordered stretches follow at residues 1 to 32 (MAQEKMELDLELPPGSAAAPSDGGGLRRSNSA), 112 to 198 (EESL…PIKR), and 235 to 284 (AHTL…LPID). Low complexity-rich tracts occupy residues 152 to 164 (SPSLQSLVSSSGL) and 172 to 184 (PTRRFSSRRSQSP). Positions 258 to 269 (STGSPVSLSDSR) are enriched in polar residues.

The protein belongs to the FAM122 family.

It is found in the nucleus. It localises to the cytoplasm. Functionally, acts as an inhibitor of serine/threonine-protein phosphatase 2A (PP2A) activity. Potentiates ubiquitin-mediated proteasomal degradation of serine/threonine-protein phosphatase 2A catalytic subunit alpha (PPP2CA). Inhibits PP2A-mediated dephosphorylation of WEE1, promoting ubiquitin-mediated proteolysis of WEE1, thereby releasing G2/M checkpoint. This Gallus gallus (Chicken) protein is P2R1A-PPP2R2A-interacting phosphatase regulator 1.